The primary structure comprises 351 residues: Ferrochelatase (351 aa).

Positions 221 and 302 each coordinate Fe cation.

Belongs to the ferrochelatase family.

Its subcellular location is the cytoplasm. It catalyses the reaction heme b + 2 H(+) = protoporphyrin IX + Fe(2+). It functions in the pathway porphyrin-containing compound metabolism; protoheme biosynthesis; protoheme from protoporphyrin-IX: step 1/1. Its function is as follows. Catalyzes the ferrous insertion into protoporphyrin IX. The protein is Ferrochelatase of Bradyrhizobium sp. (strain BTAi1 / ATCC BAA-1182).